We begin with the raw amino-acid sequence, 497 residues long: Guanosine-5'-triphosphate,3'-diphosphate pyrophosphatase (497 aa).

The protein belongs to the GppA/Ppx family. GppA subfamily.

The catalysed reaction is guanosine 3'-diphosphate 5'-triphosphate + H2O = guanosine 3',5'-bis(diphosphate) + phosphate + H(+). It functions in the pathway purine metabolism; ppGpp biosynthesis; ppGpp from GTP: step 2/2. Its function is as follows. Catalyzes the conversion of pppGpp to ppGpp. Guanosine pentaphosphate (pppGpp) is a cytoplasmic signaling molecule which together with ppGpp controls the 'stringent response', an adaptive process that allows bacteria to respond to amino acid starvation, resulting in the coordinated regulation of numerous cellular activities. The sequence is that of Guanosine-5'-triphosphate,3'-diphosphate pyrophosphatase from Vibrio cholerae serotype O1 (strain ATCC 39541 / Classical Ogawa 395 / O395).